The following is a 699-amino-acid chain: Elongation factor G (699 aa).

Residues 10–292 (NRTRNIGIMA…AVIDYLPSPT (283 aa)) enclose the tr-type G domain. Residues 19–26 (AHIDAGKT), 90–94 (DTPGH), and 144–147 (NKMD) each bind GTP. The tract at residues 292-312 (TDVPAIRGEEDDGSEGSRSAS) is disordered.

Belongs to the TRAFAC class translation factor GTPase superfamily. Classic translation factor GTPase family. EF-G/EF-2 subfamily.

It is found in the cytoplasm. Functionally, catalyzes the GTP-dependent ribosomal translocation step during translation elongation. During this step, the ribosome changes from the pre-translocational (PRE) to the post-translocational (POST) state as the newly formed A-site-bound peptidyl-tRNA and P-site-bound deacylated tRNA move to the P and E sites, respectively. Catalyzes the coordinated movement of the two tRNA molecules, the mRNA and conformational changes in the ribosome. This chain is Elongation factor G, found in Coxiella burnetii (strain RSA 331 / Henzerling II).